A 300-amino-acid chain; its full sequence is Probable protein phosphatase 2C 3 (300 aa).

A PPM-type phosphatase domain is found at 23-298 (IFAASEMQGW…DNMTTILVYL (276 aa)). Mn(2+) contacts are provided by Asp-57, Gly-58, Asp-237, and Asp-289.

The protein belongs to the PP2C family. It depends on Mg(2+) as a cofactor. Mn(2+) serves as cofactor.

Its subcellular location is the membrane. It catalyses the reaction O-phospho-L-seryl-[protein] + H2O = L-seryl-[protein] + phosphate. The catalysed reaction is O-phospho-L-threonyl-[protein] + H2O = L-threonyl-[protein] + phosphate. In terms of biological role, enzyme with a broad specificity. The polypeptide is Probable protein phosphatase 2C 3 (Paramecium tetraurelia).